A 252-amino-acid polypeptide reads, in one-letter code: Endonuclease NucS (252 aa).

It belongs to the NucS endonuclease family.

The protein resides in the cytoplasm. Cleaves both 3' and 5' ssDNA extremities of branched DNA structures. This is Endonuclease NucS from Thermococcus kodakarensis (strain ATCC BAA-918 / JCM 12380 / KOD1) (Pyrococcus kodakaraensis (strain KOD1)).